The sequence spans 98 residues: NADH-ubiquinone oxidoreductase chain 4L (98 aa).

The next 3 membrane-spanning stretches (helical) occupy residues 1 to 21, 29 to 49, and 61 to 81; these read MSIT…GMFV, SLLC…IVSL, and VILL…LIMV.

This sequence belongs to the complex I subunit 4L family. As to quaternary structure, core subunit of respiratory chain NADH dehydrogenase (Complex I) which is composed of 45 different subunits.

The protein localises to the mitochondrion inner membrane. It catalyses the reaction a ubiquinone + NADH + 5 H(+)(in) = a ubiquinol + NAD(+) + 4 H(+)(out). Functionally, core subunit of the mitochondrial membrane respiratory chain NADH dehydrogenase (Complex I) which catalyzes electron transfer from NADH through the respiratory chain, using ubiquinone as an electron acceptor. Part of the enzyme membrane arm which is embedded in the lipid bilayer and involved in proton translocation. The chain is NADH-ubiquinone oxidoreductase chain 4L (MT-ND4L) from Ochotona princeps (Southern American pika).